The primary structure comprises 122 residues: uncharacterized protein (122 aa).

This sequence belongs to the phage O protein family.

This is an uncharacterized protein from Escherichia coli O6:H1 (strain CFT073 / ATCC 700928 / UPEC).